A 314-amino-acid polypeptide reads, in one-letter code: Malate dehydrogenase (314 aa).

NAD(+) is bound by residues 11–16 (GSGNIG) and Asp-35. 2 residues coordinate substrate: Arg-84 and Arg-90. NAD(+) is bound by residues Asn-97 and 120-122 (ITN). The substrate site is built by Asn-122 and Arg-153. His-177 (proton acceptor) is an active-site residue.

It belongs to the LDH/MDH superfamily. MDH type 3 family.

It catalyses the reaction (S)-malate + NAD(+) = oxaloacetate + NADH + H(+). In terms of biological role, catalyzes the reversible oxidation of malate to oxaloacetate. The sequence is that of Malate dehydrogenase from Rickettsia felis (strain ATCC VR-1525 / URRWXCal2) (Rickettsia azadi).